Here is a 110-residue protein sequence, read N- to C-terminus: Large ribosomal subunit protein uL22 (110 aa).

This sequence belongs to the universal ribosomal protein uL22 family. In terms of assembly, part of the 50S ribosomal subunit.

Functionally, this protein binds specifically to 23S rRNA; its binding is stimulated by other ribosomal proteins, e.g. L4, L17, and L20. It is important during the early stages of 50S assembly. It makes multiple contacts with different domains of the 23S rRNA in the assembled 50S subunit and ribosome. Its function is as follows. The globular domain of the protein is located near the polypeptide exit tunnel on the outside of the subunit, while an extended beta-hairpin is found that lines the wall of the exit tunnel in the center of the 70S ribosome. This is Large ribosomal subunit protein uL22 from Mycoplasmopsis pulmonis (strain UAB CTIP) (Mycoplasma pulmonis).